The chain runs to 200 residues: NAD(P)H dehydrogenase (quinone) (200 aa).

The region spanning 4 to 191 (VLVLYYSSYG…DIARYQGKHV (188 aa)) is the Flavodoxin-like domain. FMN is bound by residues 10–15 (SSYGHV) and 79–81 (TRF). Position 12 (Tyr12) interacts with NAD(+). Trp99 lines the substrate pocket. Residues 114-120 (STGTQHG) and His135 contribute to the FMN site.

The protein belongs to the WrbA family. Requires FMN as cofactor.

The enzyme catalyses a quinone + NADH + H(+) = a quinol + NAD(+). It carries out the reaction a quinone + NADPH + H(+) = a quinol + NADP(+). This chain is NAD(P)H dehydrogenase (quinone), found in Burkholderia ambifaria (strain MC40-6).